The chain runs to 707 residues: Trans-feruloyl-CoA synthase FCS1 (707 aa).

Residues His-267 and 524–535 contribute to the ATP site; that span reads ARAIGYPVVMKA. Residues 498–549 form the ATP-grasp domain; sequence KELLRPLGIAFPPSQFAANAEAAAAAARAIGYPVVMKAQAAALGHKSDAGGV.

The protein in the N-terminal section; belongs to the acetate CoA ligase alpha subunit family. It in the C-terminal section; belongs to the acetate CoA ligase beta subunit family. Homodimer.

The catalysed reaction is (E)-ferulate + ATP + CoA = (E)-feruloyl-CoA + ADP + phosphate. Functionally, catalyzes the formation of feruloyl-CoA, ADP and phosphate from ferulate, CoA and ATP. The chain is Trans-feruloyl-CoA synthase FCS1 from Unknown prokaryotic organism.